The following is a 737-amino-acid chain: Autolysin (737 aa).

Over residues 1–13 the composition is skewed to basic and acidic residues; sequence MKKESMSRIERRK. Disordered regions lie at residues 1-28, 51-132, and 335-360; these read MKKESMSRIERRKAQQRKKTPVQWKKST, AEAT…TDSS, and PSSGGNTGGGTVNPGTGGSNNQSGTN. The first 53 residues, 1 to 53, serve as a signal peptide directing secretion; the sequence is MKKESMSRIERRKAQQRKKTPVQWKKSTTLFSSALIVSSVGTPVALLPVTAEA. Positions 67 to 117 are enriched in low complexity; it reads PTTETGLVETPTTETTPGTTEQPTTDSSTTTESTTESSKETPTTPSTEQPT. Positions 118 to 132 are enriched in polar residues; sequence ADSTTPVESGTTDSS. Residues 339-352 are compositionally biased toward gly residues; sequence GNTGGGTVNPGTGG. A LysM 1 domain is found at 361–404; the sequence is TYYTVKSGDTLNKIAAQYGVSVANLRSWNGISGDLIFVGQKLIV. Residues 409–429 are disordered; it reads SGNTGGSGSGGSNNNQSGTNT. A compositionally biased stretch (gly residues) spans 410–419; the sequence is GNTGGSGSGG. Low complexity predominate over residues 420–429; it reads SNNNQSGTNT. LysM domains follow at residues 429-472, 497-540, 565-608, 631-674, and 693-736; these read TYYT…KLIV, TYYT…KIIV, TSYT…TIIV, and KRHT…TLKV.

Belongs to the glycosyl hydrolase 73 family.

It is found in the secreted. Functionally, hydrolyzes the cell wall of E.faecalis and M.lysodeikticus. May play an important role in cell wall growth and cell separation. The polypeptide is Autolysin (Enterococcus faecalis (strain ATCC 700802 / V583)).